A 381-amino-acid chain; its full sequence is Glycerophosphocholine acyltransferase 1 (381 aa).

The Cytoplasmic segment spans residues 1-63 (MANNEDSNSN…IAKQAEEHER (63 aa)). Residues 64-84 (FINKVTHLVGVLGFGGFCFLL) traverse the membrane as a helical segment. Residues 85 to 89 (GARPQ) lie on the Lumenal side of the membrane. The helical transmembrane segment at 90–110 (DIPLVYCFFYVIFVPLRWIYY) threads the bilayer. Over 111 to 116 (RFKKWH) the chain is Cytoplasmic. Residues 117-137 (YYLLDFCYYANTIFLVDLLLY) form a helical membrane-spanning segment. Over 138-141 (PKNE) the chain is Lumenal. A helical membrane pass occupies residues 142 to 162 (KLFMVCFSFAEGPLAWAIIVW). At 163-173 (RCSLVFSSPDK) the chain is on the cytoplasmic side. A helical membrane pass occupies residues 174–194 (IVSVLIHLLPGLVFFTIRWWN). The Lumenal portion of the chain corresponds to 195–223 (PATFAAMHPVGTDRRVSWPYVEDKAYLFT). The helical transmembrane segment at 224 to 244 (WLFLVPLVVYTLWQVLYFLIV) threads the bilayer. Residues 245-291 (NVLRRQRLLRDPEVMTSYRELSKKAEKANNKLWQLSGLLGDQNRIWM) are Cytoplasmic-facing. A helical transmembrane segment spans residues 292–312 (YILFQAIFTVATMALTVPIFL). Residues 313–315 (SYR) are Lumenal-facing. Residues 316-336 (LHVIFQILKISAAVWNGGSFL) form a helical membrane-spanning segment. The Cytoplasmic segment spans residues 337–381 (LEVMPRQVIQKEKKKKAEMQPIEEQILHHEAVSHPTENEPKSTET).

It belongs to the GPC1 family.

The protein resides in the membrane. It carries out the reaction sn-glycerol 3-phosphocholine + an acyl-CoA = a 1-acyl-sn-glycero-3-phosphocholine + CoA. The enzyme catalyses sn-glycero-3-phosphoethanolamine + an acyl-CoA = a monoacyl-sn-glycero-3-phosphoethanolamine + CoA. The catalysed reaction is sn-glycerol 3-phosphocholine + (9Z)-octadecenoyl-CoA = (9Z-octadecenoyl)-sn-glycero-3-phosphocholine + CoA. Glycerophosphocholine acyltransferase (GPCAT) that utilizes acyl-CoA to acylate glycero-3-phosphocholine (GPC), forming lysophosphatidylcholine (LPC). Shows broad acyl specificities with a preference for 16:0-CoA, polyunsaturated acyl-CoA, and the hydroxylated ricinoleoyl-CoA. Also catalyzes the acylation of glycero-3-phosphoethanolamine (GPE) with acyl-CoA. In addition to acyl-CoA, GPCAT efficiently utilizes LPC and lysophosphatidylethanolamine (LPE) as acyl donors in the acylation of GPC. Contributes to the maintenance of phosphatidylcholine (PC) homeostasis and might also have specific functions in acyl editing of PC, such as transferring acyl groups modified at the sn-2 position of PC to the sn-1. This is Glycerophosphocholine acyltransferase 1 from Arabidopsis thaliana (Mouse-ear cress).